A 179-amino-acid polypeptide reads, in one-letter code: Large ribosomal subunit protein uL6 (179 aa).

It belongs to the universal ribosomal protein uL6 family. In terms of assembly, part of the 50S ribosomal subunit.

This protein binds to the 23S rRNA, and is important in its secondary structure. It is located near the subunit interface in the base of the L7/L12 stalk, and near the tRNA binding site of the peptidyltransferase center. This chain is Large ribosomal subunit protein uL6, found in Trichodesmium erythraeum (strain IMS101).